We begin with the raw amino-acid sequence, 389 residues long: Lipid-A-disaccharide synthase (389 aa).

The protein belongs to the LpxB family.

The catalysed reaction is a lipid X + a UDP-2-N,3-O-bis[(3R)-3-hydroxyacyl]-alpha-D-glucosamine = a lipid A disaccharide + UDP + H(+). It participates in bacterial outer membrane biogenesis; LPS lipid A biosynthesis. Its function is as follows. Condensation of UDP-2,3-diacylglucosamine and 2,3-diacylglucosamine-1-phosphate to form lipid A disaccharide, a precursor of lipid A, a phosphorylated glycolipid that anchors the lipopolysaccharide to the outer membrane of the cell. The protein is Lipid-A-disaccharide synthase of Burkholderia vietnamiensis (strain G4 / LMG 22486) (Burkholderia cepacia (strain R1808)).